The sequence spans 709 residues: Elongation factor G (709 aa).

The 277-residue stretch at 10-286 (NKVRNIGIMA…AVVDFLPSPL (277 aa)) folds into the tr-type G domain. GTP contacts are provided by residues 19 to 26 (AHIDAGKT), 83 to 87 (DTPGH), and 137 to 140 (NKMD).

The protein belongs to the TRAFAC class translation factor GTPase superfamily. Classic translation factor GTPase family. EF-G/EF-2 subfamily.

Its subcellular location is the cytoplasm. Functionally, catalyzes the GTP-dependent ribosomal translocation step during translation elongation. During this step, the ribosome changes from the pre-translocational (PRE) to the post-translocational (POST) state as the newly formed A-site-bound peptidyl-tRNA and P-site-bound deacylated tRNA move to the P and E sites, respectively. Catalyzes the coordinated movement of the two tRNA molecules, the mRNA and conformational changes in the ribosome. This Corynebacterium glutamicum (strain R) protein is Elongation factor G.